A 664-amino-acid chain; its full sequence is Intraflagellar transport protein 70A2 (664 aa).

7 TPR repeats span residues 11 to 44 (DGEF…SPRS), 45 to 78 (RAGL…HPEL), 153 to 186 (PDGL…SGYQ), 188 to 220 (DVSY…GIRQ), 395 to 423 (QVQE…EKYI), 424 to 456 (PVLM…CNDH), and 458 to 491 (VWKL…NYDN). A coiled-coil region spans residues 507–534 (YIMTSQNEEAEELMRKIEKEEEQLSYGD). One copy of the TPR 8 repeat lies at 543 to 576 (CIVNLVIGTLYCAKGNYDFGISRVIKSLEPYHKK).

It belongs to the TTC30/dfy-1/fleer family. Interacts wit the IFT B complex component IFT52.

The protein localises to the cell projection. The protein resides in the cilium. In terms of biological role, required for polyglutamylation of axonemal tubulin. Plays a role in anterograde intraflagellar transport (IFT), the process by which cilia precursors are transported from the base of the cilium to the site of their incorporation at the tip. The sequence is that of Intraflagellar transport protein 70A2 (Ift70a2) from Rattus norvegicus (Rat).